A 147-amino-acid polypeptide reads, in one-letter code: Small ribosomal subunit protein bS6 (147 aa).

The segment at 107–147 (KEGRERKARPARAERRDDTEAEDLSDEEGVEAEDFEEEQGV) is disordered. Acidic residues predominate over residues 125 to 147 (TEAEDLSDEEGVEAEDFEEEQGV).

The protein belongs to the bacterial ribosomal protein bS6 family.

In terms of biological role, binds together with bS18 to 16S ribosomal RNA. This Cellvibrio japonicus (strain Ueda107) (Pseudomonas fluorescens subsp. cellulosa) protein is Small ribosomal subunit protein bS6.